Here is a 206-residue protein sequence, read N- to C-terminus: Pyridoxine/pyridoxamine 5'-phosphate oxidase (206 aa).

Residues 54–59 (RVVLLK), 69–70 (YT), Arg-75, Lys-76, and Gln-98 each bind FMN. Substrate is bound at residue Lys-59. Substrate is bound by residues Tyr-116, Arg-120, and Ser-124. FMN contacts are provided by residues 133–134 (QS) and Trp-178. Position 184–186 (184–186 (RLH)) interacts with substrate. FMN is bound at residue Arg-188.

This sequence belongs to the pyridoxamine 5'-phosphate oxidase family. As to quaternary structure, homodimer. The cofactor is FMN.

The enzyme catalyses pyridoxamine 5'-phosphate + O2 + H2O = pyridoxal 5'-phosphate + H2O2 + NH4(+). It catalyses the reaction pyridoxine 5'-phosphate + O2 = pyridoxal 5'-phosphate + H2O2. It functions in the pathway cofactor metabolism; pyridoxal 5'-phosphate salvage; pyridoxal 5'-phosphate from pyridoxamine 5'-phosphate: step 1/1. The protein operates within cofactor metabolism; pyridoxal 5'-phosphate salvage; pyridoxal 5'-phosphate from pyridoxine 5'-phosphate: step 1/1. Functionally, catalyzes the oxidation of either pyridoxine 5'-phosphate (PNP) or pyridoxamine 5'-phosphate (PMP) into pyridoxal 5'-phosphate (PLP). The chain is Pyridoxine/pyridoxamine 5'-phosphate oxidase from Anaplasma phagocytophilum (strain HZ).